Consider the following 146-residue polypeptide: Small ribosomal subunit protein uS9 (146 aa).

Residue S3 is modified to Phosphoserine. An N6-acetyllysine modification is found at K60.

The protein belongs to the universal ribosomal protein uS9 family. Component of the small ribosomal subunit. Part of the small subunit (SSU) processome, composed of more than 70 proteins and the RNA chaperone small nucleolar RNA (snoRNA) U3.

It localises to the cytoplasm. It is found in the nucleus. The protein localises to the nucleolus. In terms of biological role, component of the small ribosomal subunit. The ribosome is a large ribonucleoprotein complex responsible for the synthesis of proteins in the cell. Part of the small subunit (SSU) processome, first precursor of the small eukaryotic ribosomal subunit. During the assembly of the SSU processome in the nucleolus, many ribosome biogenesis factors, an RNA chaperone and ribosomal proteins associate with the nascent pre-rRNA and work in concert to generate RNA folding, modifications, rearrangements and cleavage as well as targeted degradation of pre-ribosomal RNA by the RNA exosome. The polypeptide is Small ribosomal subunit protein uS9 (RPS16) (Bos taurus (Bovine)).